Here is a 69-residue protein sequence, read N- to C-terminus: Large ribosomal subunit protein uL29 (69 aa).

This sequence belongs to the universal ribosomal protein uL29 family.

This chain is Large ribosomal subunit protein uL29, found in Polaromonas sp. (strain JS666 / ATCC BAA-500).